The sequence spans 164 residues: Ribosome maturation factor RimP (164 aa).

Belongs to the RimP family.

The protein localises to the cytoplasm. In terms of biological role, required for maturation of 30S ribosomal subunits. The polypeptide is Ribosome maturation factor RimP (Mycoplasma mycoides subsp. mycoides SC (strain CCUG 32753 / NCTC 10114 / PG1)).